The sequence spans 237 residues: LexA repressor (237 aa).

The H-T-H motif DNA-binding region spans phenylalanine 26 to threonine 46. Active-site for autocatalytic cleavage activity residues include serine 158 and lysine 196.

Belongs to the peptidase S24 family. Homodimer.

The catalysed reaction is Hydrolysis of Ala-|-Gly bond in repressor LexA.. Functionally, represses a number of genes involved in the response to DNA damage (SOS response), including recA and lexA. In the presence of single-stranded DNA, RecA interacts with LexA causing an autocatalytic cleavage which disrupts the DNA-binding part of LexA, leading to derepression of the SOS regulon and eventually DNA repair. In Bartonella quintana (strain Toulouse) (Rochalimaea quintana), this protein is LexA repressor.